The following is a 351-amino-acid chain: MIILFVDFDYFFAQVEEVLNPQYKGKPLIVCVYSGRNEKSGAVATANYEARKLGVKAGMPISRAMELAPNAIFVPMHKEVYTEVSNRIMSIISSYSDKIEIASIDEAYIDITSKVKNFEEAIELGKKLKREIMEKEKITVTVGIAPNKVFAKIIADRVKPNGLGVVKPEEIEEFIKSIDIDEVPGVGNVISERLHSLGVNKLIDILSVSFDKLKEEIGEAKAFYLYRLATNSYFEPVLNKERVPHGRYLTLPKNTRDIKVIELYLKKAIDEAYNKIEGIPKRMTVVTIMQDLDIVSKSKTFKTGISKERAYTESIELLKQILQKDSRLVRRVGVRFDNIYKSKGLDVFFNS.

A UmuC domain is found at 3 to 187 (ILFVDFDYFF…IDIDEVPGVG (185 aa)). Asp7 and Asp105 together coordinate Mg(2+). Glu106 is a catalytic residue.

The protein belongs to the DNA polymerase type-Y family. Mg(2+) serves as cofactor.

The catalysed reaction is DNA(n) + a 2'-deoxyribonucleoside 5'-triphosphate = DNA(n+1) + diphosphate. Functionally, poorly processive, error-prone DNA polymerase involved in untargeted mutagenesis. Copies undamaged DNA at stalled replication forks, which arise in vivo from mismatched or misaligned primer ends. These misaligned primers can be extended by PolIV. Exhibits no 3'-5' exonuclease (proofreading) activity. May be involved in translesional synthesis. The sequence is that of DNA polymerase IV from Sulfurisphaera tokodaii (strain DSM 16993 / JCM 10545 / NBRC 100140 / 7) (Sulfolobus tokodaii).